The primary structure comprises 291 residues: ATP synthase gamma chain (291 aa).

The protein belongs to the ATPase gamma chain family. In terms of assembly, F-type ATPases have 2 components, CF(1) - the catalytic core - and CF(0) - the membrane proton channel. CF(1) has five subunits: alpha(3), beta(3), gamma(1), delta(1), epsilon(1). CF(0) has three main subunits: a, b and c.

Its subcellular location is the cell inner membrane. In terms of biological role, produces ATP from ADP in the presence of a proton gradient across the membrane. The gamma chain is believed to be important in regulating ATPase activity and the flow of protons through the CF(0) complex. The polypeptide is ATP synthase gamma chain (Sulfurihydrogenibium sp. (strain YO3AOP1)).